Consider the following 1479-residue polypeptide: Type VII secretion system protein EssC (1479 aa).

At 1–229 (MHKLIIKYNK…RPPQPIQKNN (229 aa)) the chain is on the cytoplasmic side. A helical membrane pass occupies residues 230–252 (TVIWRSIIPPLVMIALTVVIFLV). Topologically, residues 253 to 256 (RPIG) are extracellular. Residues 257–279 (IYILMMIGMSSVTIVFGITTYFS) form a helical membrane-spanning segment. At 280–1479 (EKKKYNKDVE…QAYQKIRWFK (1200 aa)) the chain is on the cytoplasmic side. FtsK domains are found at residues 652–846 (DDIL…QDSN) and 997–1183 (QGPM…SEVS). ATP is bound by residues 672 to 679 (GTTGSGKS) and 1014 to 1021 (GSPGYGRT).

Belongs to the EssC family. Homooligomer. Interacts with EsaE.

Its subcellular location is the cell membrane. Its function is as follows. Component of the type VII secretion system (Ess). Required for the secretion of substrates including EsxA and EsxB. However, unable to support secretion of the substrate protein EsxC. The polypeptide is Type VII secretion system protein EssC (Staphylococcus aureus (strain MSSA476)).